The following is a 292-amino-acid chain: Lipoyl synthase (292 aa).

Residues cysteine 38, cysteine 43, cysteine 49, cysteine 64, cysteine 68, cysteine 71, and serine 277 each coordinate [4Fe-4S] cluster. The 217-residue stretch at 50–266 folds into the Radical SAM core domain; it reads WSKGTATFLL…REIALDAGFR (217 aa).

Belongs to the radical SAM superfamily. Lipoyl synthase family. The cofactor is [4Fe-4S] cluster.

Its subcellular location is the cytoplasm. It carries out the reaction [[Fe-S] cluster scaffold protein carrying a second [4Fe-4S](2+) cluster] + N(6)-octanoyl-L-lysyl-[protein] + 2 oxidized [2Fe-2S]-[ferredoxin] + 2 S-adenosyl-L-methionine + 4 H(+) = [[Fe-S] cluster scaffold protein] + N(6)-[(R)-dihydrolipoyl]-L-lysyl-[protein] + 4 Fe(3+) + 2 hydrogen sulfide + 2 5'-deoxyadenosine + 2 L-methionine + 2 reduced [2Fe-2S]-[ferredoxin]. Its pathway is protein modification; protein lipoylation via endogenous pathway; protein N(6)-(lipoyl)lysine from octanoyl-[acyl-carrier-protein]: step 2/2. Its function is as follows. Catalyzes the radical-mediated insertion of two sulfur atoms into the C-6 and C-8 positions of the octanoyl moiety bound to the lipoyl domains of lipoate-dependent enzymes, thereby converting the octanoylated domains into lipoylated derivatives. This chain is Lipoyl synthase, found in Chlorobaculum parvum (strain DSM 263 / NCIMB 8327) (Chlorobium vibrioforme subsp. thiosulfatophilum).